The primary structure comprises 612 residues: Chaperone protein DnaK (612 aa).

Phosphothreonine; by autocatalysis is present on threonine 174. The interval 579-612 is disordered; the sequence is GSAGTGAGSQAGSAAGSGDGQSMDAEFKVKDEDK. The segment covering 581–597 has biased composition (gly residues); it reads AGTGAGSQAGSAAGSGD. The segment covering 603-612 has biased composition (basic and acidic residues); sequence AEFKVKDEDK.

Belongs to the heat shock protein 70 family.

Its function is as follows. Acts as a chaperone. The polypeptide is Chaperone protein DnaK (Symbiobacterium thermophilum (strain DSM 24528 / JCM 14929 / IAM 14863 / T)).